The chain runs to 563 residues: Probable tRNA (uracil-O(2)-)-methyltransferase (563 aa).

The C3H1-type zinc finger occupies 536–563 (TIRKAPCWMSLHHPDGCPVGQEACRYEH).

The protein belongs to the TRM44 family.

It is found in the cytoplasm. The enzyme catalyses uridine(44) in tRNA(Ser) + S-adenosyl-L-methionine = 2'-O-methyluridine(44) in tRNA(Ser) + S-adenosyl-L-homocysteine + H(+). Functionally, probable adenosyl-L-methionine (AdoMet)-dependent tRNA (uracil-O(2)-)-methyltransferase. The sequence is that of Probable tRNA (uracil-O(2)-)-methyltransferase from Caenorhabditis elegans.